A 372-amino-acid polypeptide reads, in one-letter code: Dual-specificity RNA methyltransferase RlmN (372 aa).

The active-site Proton acceptor is the glutamate 92. The Radical SAM core domain occupies 98–337 (ETDRATLCVS…VILRKTRGDD (240 aa)). The cysteines at positions 105 and 342 are disulfide-linked. The [4Fe-4S] cluster site is built by cysteine 112, cysteine 116, and cysteine 119. Residues 166–167 (GE), serine 198, 220–222 (SLH), and asparagine 299 each bind S-adenosyl-L-methionine. Cysteine 342 functions as the S-methylcysteine intermediate in the catalytic mechanism.

The protein belongs to the radical SAM superfamily. RlmN family. It depends on [4Fe-4S] cluster as a cofactor.

The protein resides in the cytoplasm. The catalysed reaction is adenosine(2503) in 23S rRNA + 2 reduced [2Fe-2S]-[ferredoxin] + 2 S-adenosyl-L-methionine = 2-methyladenosine(2503) in 23S rRNA + 5'-deoxyadenosine + L-methionine + 2 oxidized [2Fe-2S]-[ferredoxin] + S-adenosyl-L-homocysteine. It carries out the reaction adenosine(37) in tRNA + 2 reduced [2Fe-2S]-[ferredoxin] + 2 S-adenosyl-L-methionine = 2-methyladenosine(37) in tRNA + 5'-deoxyadenosine + L-methionine + 2 oxidized [2Fe-2S]-[ferredoxin] + S-adenosyl-L-homocysteine. Specifically methylates position 2 of adenine 2503 in 23S rRNA and position 2 of adenine 37 in tRNAs. m2A2503 modification seems to play a crucial role in the proofreading step occurring at the peptidyl transferase center and thus would serve to optimize ribosomal fidelity. The chain is Dual-specificity RNA methyltransferase RlmN from Histophilus somni (strain 129Pt) (Haemophilus somnus).